Here is a 681-residue protein sequence, read N- to C-terminus: U3 small nucleolar ribonucleoprotein protein MPP10 (681 aa).

Phosphoserine occurs at positions 61, 120, and 140. Residues 109–139 (ECEDEECEEDASEVEADNQENLETDLDEEQL) adopt a coiled-coil conformation. Positions 111–144 (EDEECEEDASEVEADNQENLETDLDEEQLSDEGG) are enriched in acidic residues. Disordered regions lie at residues 111 to 202 (EDEE…SVVD), 215 to 256 (LEKV…GRQK), and 268 to 365 (YKDF…EKRQ). Residues 145–163 (DVPKGRDRAKSSRKSDPRK) are compositionally biased toward basic and acidic residues. A phosphoserine mark is found at serine 164, serine 168, and serine 172. The span at 215 to 227 (LEKVEKEEEKRPD) shows a compositional bias: basic and acidic residues. 2 stretches are compositionally biased toward acidic residues: residues 228 to 248 (GEEE…DESE) and 273 to 322 (DPVE…EDEN). Serine 244, serine 247, serine 277, and serine 346 each carry phosphoserine. The stretch at 349-383 (AVKQESDEVKSSFEKRQEKMNEKIASLEKELLDKK) forms a coiled coil. Lysine 351 participates in a covalent cross-link: Glycyl lysine isopeptide (Lys-Gly) (interchain with G-Cter in SUMO2). A compositionally biased stretch (basic and acidic residues) spans 352–365 (QESDEVKSSFEKRQ). Glycyl lysine isopeptide (Lys-Gly) (interchain with G-Cter in SUMO2) cross-links involve residues lysine 383 and lysine 395. Residues 471 to 491 (AEIYEQEYLKLNQQKTEEEDN) adopt a coiled-coil conformation. Lysine 556 is covalently cross-linked (Glycyl lysine isopeptide (Lys-Gly) (interchain with G-Cter in SUMO2)). Residues 560 to 576 (KAGDLKTAAEKTATDKK) show a composition bias toward basic and acidic residues. Positions 560 to 644 (KAGDLKTAAE…RKDKPLKSSQ (85 aa)) are disordered. A coiled-coil region spans residues 575 to 604 (KKRERRKKKYQKRLKIKEKEKRKKLLEKNN). The segment covering 577-599 (RERRKKKYQKRLKIKEKEKRKKL) has biased composition (basic residues). N6-acetyllysine is present on lysine 609. Over residues 630–640 (LLKDERKDKPL) the composition is skewed to basic and acidic residues. Glycyl lysine isopeptide (Lys-Gly) (interchain with G-Cter in SUMO2) cross-links involve residues lysine 632 and lysine 649. Residues 657–681 (QINDAKQPEKIKKKKQDISVHKLKL) are disordered. Positions 662 to 681 (KQPEKIKKKKQDISVHKLKL) are enriched in basic and acidic residues.

This sequence belongs to the MPP10 family. Part of the small subunit (SSU) processome, composed of more than 70 proteins and the RNA chaperone small nucleolar RNA (snoRNA) U3. Component of a heterotrimeric complex containing IMP3, IMP4 and MPHOSPH10. Interacts with IMP3 and IMP4. Post-translationally, phosphorylated in M (mitotic) phase.

It localises to the nucleus. It is found in the nucleolus. The protein localises to the chromosome. Component of the 60-80S U3 small nucleolar ribonucleoprotein (U3 snoRNP). Required for the early cleavages during pre-18S ribosomal RNA processing. Part of the small subunit (SSU) processome, first precursor of the small eukaryotic ribosomal subunit. During the assembly of the SSU processome in the nucleolus, many ribosome biogenesis factors, an RNA chaperone and ribosomal proteins associate with the nascent pre-rRNA and work in concert to generate RNA folding, modifications, rearrangements and cleavage as well as targeted degradation of pre-ribosomal RNA by the RNA exosome. In Mus musculus (Mouse), this protein is U3 small nucleolar ribonucleoprotein protein MPP10 (Mphosph10).